The following is a 312-amino-acid chain: Small ribosomal subunit biogenesis GTPase RsgA (312 aa).

Positions 86-245 (QSFLKRPAVA…LADTPGFNRP (160 aa)) constitute a CP-type G domain. GTP is bound by residues 135–138 (TKID) and 187–195 (GPSGVGKTS). Positions 270, 275, 277, and 283 each coordinate Zn(2+).

The protein belongs to the TRAFAC class YlqF/YawG GTPase family. RsgA subfamily. In terms of assembly, monomer. Associates with 30S ribosomal subunit, binds 16S rRNA. Zn(2+) is required as a cofactor.

It is found in the cytoplasm. One of several proteins that assist in the late maturation steps of the functional core of the 30S ribosomal subunit. Helps release RbfA from mature subunits. May play a role in the assembly of ribosomal proteins into the subunit. Circularly permuted GTPase that catalyzes slow GTP hydrolysis, GTPase activity is stimulated by the 30S ribosomal subunit. This chain is Small ribosomal subunit biogenesis GTPase RsgA, found in Prochlorococcus marinus (strain NATL2A).